The sequence spans 341 residues: Ribosomal RNA small subunit methyltransferase H (341 aa).

Residues 47–49, Asp64, Phe91, Asp109, and Gln116 contribute to the S-adenosyl-L-methionine site; that span reads GGY.

This sequence belongs to the methyltransferase superfamily. RsmH family.

The protein resides in the cytoplasm. The enzyme catalyses cytidine(1402) in 16S rRNA + S-adenosyl-L-methionine = N(4)-methylcytidine(1402) in 16S rRNA + S-adenosyl-L-homocysteine + H(+). Specifically methylates the N4 position of cytidine in position 1402 (C1402) of 16S rRNA. This is Ribosomal RNA small subunit methyltransferase H from Rhizobium rhizogenes (strain K84 / ATCC BAA-868) (Agrobacterium radiobacter).